We begin with the raw amino-acid sequence, 412 residues long: Lysosomal phospholipase A and acyltransferase (412 aa).

Residues 1–33 form the signal peptide; sequence MDRHLCTCRETQLRSGLLLPLFLLMMLADLTLP. Asp46 serves as a coordination point for substrate. Cysteines 65 and 89 form a disulfide. Asn99 carries an N-linked (GlcNAc...) asparagine glycan. Ser198 functions as the Acyl-ester intermediate in the catalytic mechanism. Ser198 serves as a coordination point for Zn(2+). Residue Met199 participates in substrate binding. N-linked (GlcNAc...) asparagine glycans are attached at residues Asn273 and Asn289. A Zn(2+)-binding site is contributed by Cys355. Residues Asp360 and His392 each act as charge relay system in the active site. His392 is a binding site for Zn(2+). Residue Asn398 is glycosylated (N-linked (GlcNAc...) asparagine).

It belongs to the AB hydrolase superfamily. Lipase family. N-glycosylated. N-glycosylation is important for maturation of the enzyme and normal subcellular location. Detected in blood plasma. Detected in alveolar macrophages (at protein level). Detected in heart, liver, spleen, kidney, thymus, brain and lung.

It is found in the secreted. Its subcellular location is the lysosome. The protein resides in the membrane. The enzyme catalyses a 1,2-diacyl-sn-glycero-3-phosphocholine + H2O = a 2-acyl-sn-glycero-3-phosphocholine + a fatty acid + H(+). It catalyses the reaction 1-hexadecanoyl-2-(9Z-octadecenoyl)-sn-glycero-3-phosphocholine + H2O = 2-(9Z-octadecenoyl)-sn-glycero-3-phosphocholine + hexadecanoate + H(+). It carries out the reaction 1,2-di-(9Z-octadecenoyl)-sn-glycero-3-phosphocholine + H2O = 2-(9Z-octadecenoyl)-sn-glycero-3-phosphocholine + (9Z)-octadecenoate + H(+). The catalysed reaction is 1-hexadecanoyl-2-glutaroyl-sn-glycero-3-phosphocholine + H2O = 2-glutaroyl-sn-glycero-3-phosphocholine + hexadecanoate + H(+). The enzyme catalyses 1-hexadecanoyl-2-nonadioyl-sn-glycero-3-phosphocholine + H2O = 2-nonadioyl-sn-glycero-3-phosphocholine + hexadecanoate + H(+). It catalyses the reaction 1-hexadecanoyl-2-(5-oxopentanoyl)-sn-glycero-3-phosphocholine + H2O = 2-(5-oxopentanoyl)-sn-glycero-3-phosphocholine + hexadecanoate + H(+). It carries out the reaction 1-hexadecanoyl-2-(9-oxononanoyl)-sn-glycero-3-phosphocholine + H2O = 2-(9-oxononanoyl)-sn-glycero-3-phosphocholine + hexadecanoate + H(+). The catalysed reaction is 1,2-dihexadecanoyl-sn-glycero-3-phosphocholine + H2O = 2-hexadecanoyl-sn-glycero-3-phosphocholine + hexadecanoate + H(+). The enzyme catalyses a 1,2-diacyl-sn-glycero-3-phosphocholine + H2O = a 1-acyl-sn-glycero-3-phosphocholine + a fatty acid + H(+). It catalyses the reaction 1-hexadecanoyl-2-(9Z-octadecenoyl)-sn-glycero-3-phosphocholine + H2O = 1-hexadecanoyl-sn-glycero-3-phosphocholine + (9Z)-octadecenoate + H(+). It carries out the reaction 1,2-di-(9Z-octadecenoyl)-sn-glycero-3-phosphocholine + H2O = 1-(9Z-octadecenoyl)-sn-glycero-3-phosphocholine + (9Z)-octadecenoate + H(+). The catalysed reaction is 1,2-dihexadecanoyl-sn-glycero-3-phosphocholine + H2O = 1-hexadecanoyl-sn-glycero-3-phosphocholine + hexadecanoate + H(+). The enzyme catalyses a 1-acyl-sn-glycero-3-phosphocholine + H2O = sn-glycerol 3-phosphocholine + a fatty acid + H(+). It catalyses the reaction 1-hexadecanoyl-sn-glycero-3-phosphocholine + H2O = sn-glycerol 3-phosphocholine + hexadecanoate + H(+). It carries out the reaction N-(acetyl)-sphing-4-enine + a 1,2-diacyl-sn-glycero-3-phosphoethanolamine = 1-O-acyl-N-(acetyl)-sphing-4-enine + a 2-acyl-sn-glycero-3-phosphoethanolamine. The catalysed reaction is 1-hexadecanoyl-2-(9Z-octadecenoyl)-sn-glycero-3-phosphoethanolamine + N-(acetyl)-sphing-4-enine = 2-(9Z-octadecenoyl)-sn-glycero-3-phosphoethanolamine + 1-hexadecanoyl-N-(acetyl)-sphing-4-enine. The enzyme catalyses 1-hexadecanoyl-2-(9Z,12Z-octadecadienoyl)-sn-glycero-3-phosphoethanolamine + N-(acetyl)-sphing-4-enine = 2-(9Z,12Z)-octadecadienoyl-sn-glycero-3-phosphoethanolamine + 1-hexadecanoyl-N-(acetyl)-sphing-4-enine. It catalyses the reaction 1-hexadecanoyl-2-(5Z,8Z,11Z,14Z-eicosatetraenoyl)-sn-glycero-3-phosphoethanolamine + N-(acetyl)-sphing-4-enine = 2-(5Z,8Z,11Z,14Z)-eicosatetraenoyl-sn-glycero-3-phosphoethanolamine + 1-hexadecanoyl-N-(acetyl)-sphing-4-enine. It carries out the reaction N-(acetyl)-sphing-4-enine + a 1,2-diacyl-sn-glycero-3-phosphoethanolamine = 1-O-acyl-N-(acetyl)-sphing-4-enine + a 1-acyl-sn-glycero-3-phosphoethanolamine. The catalysed reaction is 1-hexadecanoyl-2-(9Z-octadecenoyl)-sn-glycero-3-phosphoethanolamine + N-(acetyl)-sphing-4-enine = 1-(9Z-octadecenoyl)-N-(acetyl)-sphing-4-enine + 1-hexadecanoyl-sn-glycero-3-phosphoethanolamine. The enzyme catalyses 1-hexadecanoyl-2-(9Z,12Z-octadecadienoyl)-sn-glycero-3-phosphoethanolamine + N-(acetyl)-sphing-4-enine = 1-(9Z,12Z-octadecadienoyl)-N-acetylsphing-4-enine + 1-hexadecanoyl-sn-glycero-3-phosphoethanolamine. It catalyses the reaction 1-hexadecanoyl-2-(5Z,8Z,11Z,14Z-eicosatetraenoyl)-sn-glycero-3-phosphoethanolamine + N-(acetyl)-sphing-4-enine = 1-(5Z,8Z,11Z,14Z)-eicosatetraenoyl-N-(acetyl)-sphing-4-enine + 1-hexadecanoyl-sn-glycero-3-phosphoethanolamine. It carries out the reaction N-(acetyl)-sphing-4-enine + a 1,2-diacyl-sn-glycero-3-phosphocholine = 1-O-acyl-N-(acetyl)-sphing-4-enine + a 2-acyl-sn-glycero-3-phosphocholine. The catalysed reaction is 1-hexadecanoyl-2-(9Z-octadecenoyl)-sn-glycero-3-phosphocholine + N-(acetyl)-sphing-4-enine = 1-hexadecanoyl-N-(acetyl)-sphing-4-enine + 2-(9Z-octadecenoyl)-sn-glycero-3-phosphocholine. The enzyme catalyses 1-hexadecanoyl-2-(9Z,12Z-octadecadienoyl)-sn-glycero-3-phosphocholine + N-(acetyl)-sphing-4-enine = 2-(9Z,12Z-octadecadienoyl)-sn-glycero-3-phosphocholine + 1-hexadecanoyl-N-(acetyl)-sphing-4-enine. It catalyses the reaction 1-hexadecanoyl-2-(5Z,8Z,11Z,14Z-eicosatetraenoyl)-sn-glycero-3-phosphocholine + N-(acetyl)-sphing-4-enine = 1-hexadecanoyl-N-(acetyl)-sphing-4-enine + 2-(5Z,8Z,11Z,14Z)-eicosatetraenoyl-sn-glycero-3-phosphocholine. It carries out the reaction 1-hexadecanoyl-2-(4Z,7Z,10Z,13Z,16Z,19Z-docosahexaenoyl)-sn-glycero-3-phosphocholine + N-(acetyl)-sphing-4-enine = 2-(4Z,7Z,10Z,13Z,16Z,19Z-docosahexaenoyl)-sn-glycero-3-phosphocholine + 1-hexadecanoyl-N-(acetyl)-sphing-4-enine. The catalysed reaction is 1-hexadecanoyl-2-nonadioyl-sn-glycero-3-phosphocholine + N-(acetyl)-sphing-4-enine = 2-nonadioyl-sn-glycero-3-phosphocholine + 1-hexadecanoyl-N-(acetyl)-sphing-4-enine. The enzyme catalyses 1-octadecanoyl-2-(9Z-octadecenoyl)-sn-glycero-3-phosphocholine + N-(acetyl)-sphing-4-enine = 1-octadecanoyl-N-(acetyl)-sphing-4-enine + 2-(9Z-octadecenoyl)-sn-glycero-3-phosphocholine. It catalyses the reaction 1-(9Z)-octadecenoyl-2-octadecanoyl-sn-glycero-3-phosphocholine + N-(acetyl)-sphing-4-enine = 2-octadecanoyl-sn-glycero-3-phosphocholine + 1-(9Z-octadecenoyl)-N-(acetyl)-sphing-4-enine. It carries out the reaction 1-octadecanoyl-2-(5Z,8Z,11Z,14Z-eicosatetraenoyl)-sn-glycero-3-phosphocholine + N-(acetyl)-sphing-4-enine = 1-octadecanoyl-N-(acetyl)-sphing-4-enine + 2-(5Z,8Z,11Z,14Z)-eicosatetraenoyl-sn-glycero-3-phosphocholine. The catalysed reaction is 1-(9Z-octadecenoyl)-2-hexadecanoyl-sn-glycero-3-phosphocholine + N-(acetyl)-sphing-4-enine = 1-(9Z-octadecenoyl)-N-(acetyl)-sphing-4-enine + 2-hexadecanoyl-sn-glycero-3-phosphocholine. The enzyme catalyses N-(acetyl)-sphing-4-enine + a 1,2-diacyl-sn-glycero-3-phosphocholine = 1-O-acyl-N-(acetyl)-sphing-4-enine + a 1-acyl-sn-glycero-3-phosphocholine. It catalyses the reaction 1-hexadecanoyl-2-(9Z-octadecenoyl)-sn-glycero-3-phosphocholine + N-(acetyl)-sphing-4-enine = 1-(9Z-octadecenoyl)-N-(acetyl)-sphing-4-enine + 1-hexadecanoyl-sn-glycero-3-phosphocholine. It carries out the reaction 1-hexadecanoyl-2-(9Z,12Z-octadecadienoyl)-sn-glycero-3-phosphocholine + N-(acetyl)-sphing-4-enine = 1-(9Z,12Z-octadecadienoyl)-N-acetylsphing-4-enine + 1-hexadecanoyl-sn-glycero-3-phosphocholine. The catalysed reaction is 1-hexadecanoyl-2-(5Z,8Z,11Z,14Z-eicosatetraenoyl)-sn-glycero-3-phosphocholine + N-(acetyl)-sphing-4-enine = 1-(5Z,8Z,11Z,14Z)-eicosatetraenoyl-N-(acetyl)-sphing-4-enine + 1-hexadecanoyl-sn-glycero-3-phosphocholine. The enzyme catalyses 1-hexadecanoyl-2-(4Z,7Z,10Z,13Z,16Z,19Z-docosahexaenoyl)-sn-glycero-3-phosphocholine + N-(acetyl)-sphing-4-enine = 1-(4Z,7Z,10Z,13Z,16Z,19Z-docosahexaenoyl)-N-(acetyl)-sphing-4-enine + 1-hexadecanoyl-sn-glycero-3-phosphocholine. It catalyses the reaction 1-octadecanoyl-2-(9Z-octadecenoyl)-sn-glycero-3-phosphocholine + N-(acetyl)-sphing-4-enine = 1-(9Z-octadecenoyl)-N-(acetyl)-sphing-4-enine + 1-octadecanoyl-sn-glycero-3-phosphocholine. It carries out the reaction 1-octadecanoyl-2-(9Z,12Z)-octadecadienoyl-sn-glycero-3-phosphocholine + N-(acetyl)-sphing-4-enine = 1-(9Z,12Z-octadecadienoyl)-N-acetylsphing-4-enine + 1-octadecanoyl-sn-glycero-3-phosphocholine. The catalysed reaction is 1-(9Z-octadecenoyl)-2-hexadecanoyl-sn-glycero-3-phosphocholine + N-(acetyl)-sphing-4-enine = 1-hexadecanoyl-N-(acetyl)-sphing-4-enine + 1-(9Z-octadecenoyl)-sn-glycero-3-phosphocholine. The enzyme catalyses 1-(9Z)-octadecenoyl-2-octadecanoyl-sn-glycero-3-phosphocholine + N-(acetyl)-sphing-4-enine = 1-octadecanoyl-N-(acetyl)-sphing-4-enine + 1-(9Z-octadecenoyl)-sn-glycero-3-phosphocholine. It catalyses the reaction 1,2-di-(9Z-octadecenoyl)-sn-glycero-3-phosphocholine + N-(acetyl)-sphing-4-enine = 1-(9Z-octadecenoyl)-N-(acetyl)-sphing-4-enine + 1-(9Z-octadecenoyl)-sn-glycero-3-phosphocholine. It carries out the reaction 1-octadecanoyl-2-(5Z,8Z,11Z,14Z-eicosatetraenoyl)-sn-glycero-3-phosphocholine + N-(acetyl)-sphing-4-enine = 1-(5Z,8Z,11Z,14Z)-eicosatetraenoyl-N-(acetyl)-sphing-4-enine + 1-octadecanoyl-sn-glycero-3-phosphocholine. The catalysed reaction is a 1,2-diacyl-sn-glycero-3-phospho-L-serine + N-(acetyl)-sphing-4-enine = a 2-acyl-sn-glycero-3-phospho-L-serine + 1-O-acyl-N-(acetyl)-sphing-4-enine. The enzyme catalyses 1-octadecanoyl-2-(9Z-octadecenoyl)-sn-glycero-3-phospho-L-serine + N-(acetyl)-sphing-4-enine = 2-(9Z-octadecenoyl)-sn-glycero-3-phospho-L-serine + 1-octadecanoyl-N-(acetyl)-sphing-4-enine. It catalyses the reaction a 1,2-diacyl-sn-glycero-3-phospho-L-serine + N-(acetyl)-sphing-4-enine = 1-O-acyl-N-(acetyl)-sphing-4-enine + a 1-acyl-sn-glycero-3-phospho-L-serine. It carries out the reaction 1-octadecanoyl-2-(9Z-octadecenoyl)-sn-glycero-3-phospho-L-serine + N-(acetyl)-sphing-4-enine = 1-octadecanoyl-sn-glycero-3-phosphoserine + 1-(9Z-octadecenoyl)-N-(acetyl)-sphing-4-enine. The catalysed reaction is a 1,2-diacyl-sn-glycero-3-phospho-(1'-sn-glycerol) + N-(acetyl)-sphing-4-enine = 2-acyl-sn-glycero-3-phospho-(1'-sn-glycerol) + 1-O-acyl-N-(acetyl)-sphing-4-enine. The enzyme catalyses 1-octadecanoyl-2-(9Z-octadecenoyl)-sn-glycero-3-phospho-(1'-sn-glycerol) + N-(acetyl)-sphing-4-enine = 2-(9Z-octadecenoyl)-sn-glycero-3-phospho-(1'-sn-glycerol) + 1-octadecanoyl-N-(acetyl)-sphing-4-enine. It catalyses the reaction a 1,2-diacyl-sn-glycero-3-phospho-(1'-sn-glycerol) + N-(acetyl)-sphing-4-enine = 1-O-acyl-N-(acetyl)-sphing-4-enine + 1-acyl-sn-glycero-3-phospho-(1'-sn-glycerol). It carries out the reaction 1-octadecanoyl-2-(9Z-octadecenoyl)-sn-glycero-3-phospho-(1'-sn-glycerol) + N-(acetyl)-sphing-4-enine = 1-octadecanoyl-sn-glycero-3-phospho-(1'-sn-glycerol) + 1-(9Z-octadecenoyl)-N-(acetyl)-sphing-4-enine. The catalysed reaction is an N-acylethanolamine + a 1,2-diacyl-sn-glycero-3-phosphocholine = 2-(acylamino)ethyl fatty acid + a 2-acyl-sn-glycero-3-phosphocholine. The enzyme catalyses an N-acylethanolamine + a 1,2-diacyl-sn-glycero-3-phosphocholine = 2-(acylamino)ethyl fatty acid + a 1-acyl-sn-glycero-3-phosphocholine. It catalyses the reaction N-(5Z,8Z,11Z,14Z-eicosatetraenoyl)-ethanolamine + 1,2-di-(9Z-octadecenoyl)-sn-glycero-3-phosphocholine = 2-[(5Z,8Z,11Z,14Z)-eicosatetraenoylamino]ethyl (9Z)-octadecenoate + (9Z-octadecenoyl)-sn-glycero-3-phosphocholine. It carries out the reaction N-(9Z-octadecenoyl) ethanolamine + 1,2-di-(9Z-octadecenoyl)-sn-glycero-3-phosphocholine = 2-[(9Z)-octadecenoylamino]ethyl (9Z)-octadecenoate + (9Z-octadecenoyl)-sn-glycero-3-phosphocholine. The catalysed reaction is a 3-acyl-sn-glycerol + a 1,2-diacyl-sn-glycero-3-phosphocholine = a 1,3-diacylglycerol + a 1-acyl-sn-glycero-3-phosphocholine. The enzyme catalyses a 3-acyl-sn-glycerol + a 1,2-diacyl-sn-glycero-3-phosphocholine = a 1,3-diacylglycerol + a 2-acyl-sn-glycero-3-phosphocholine. It catalyses the reaction 3-(9Z-octadecenoyl)-sn-glycerol + 1,2-di-(9Z-octadecenoyl)-sn-glycero-3-phosphocholine = 1,3-di-(9Z-octadecenoyl)-glycerol + (9Z-octadecenoyl)-sn-glycero-3-phosphocholine. It carries out the reaction 3-hexadecanoyl-sn-glycerol + 1,2-di-(9Z-octadecenoyl)-sn-glycero-3-phosphocholine = 1-(9Z)-octadecenoyl-3-hexadecanoyl-sn-glycerol + (9Z-octadecenoyl)-sn-glycero-3-phosphocholine. The catalysed reaction is a 1-acyl-sn-glycerol + a 1,2-diacyl-sn-glycero-3-phosphocholine = a 1,3-diacylglycerol + a 2-acyl-sn-glycero-3-phosphocholine. The enzyme catalyses a 1-acyl-sn-glycerol + a 1,2-diacyl-sn-glycero-3-phosphocholine = a 1,3-diacylglycerol + a 1-acyl-sn-glycero-3-phosphocholine. It catalyses the reaction 1-(9Z-octadecenoyl)-sn-glycerol + 1,2-di-(9Z-octadecenoyl)-sn-glycero-3-phosphocholine = 1,3-di-(9Z-octadecenoyl)-glycerol + (9Z-octadecenoyl)-sn-glycero-3-phosphocholine. It carries out the reaction 1-hexadecanoyl-sn-glycerol + 1,2-di-(9Z-octadecenoyl)-sn-glycero-3-phosphocholine = 1-hexadecanoyl-3-(9Z)-octadecenoyl-sn-glycerol + (9Z-octadecenoyl)-sn-glycero-3-phosphocholine. The catalysed reaction is a 2-acylglycerol + a 1,2-diacyl-sn-glycero-3-phosphocholine = a 1,2-diacylglycerol + a 2-acyl-sn-glycero-3-phosphocholine. The enzyme catalyses a 2-acylglycerol + a 1,2-diacyl-sn-glycero-3-phosphocholine = a 1,2-diacylglycerol + a 1-acyl-sn-glycero-3-phosphocholine. It catalyses the reaction 2-hexadecanoylglycerol + 1,2-di-(9Z-octadecenoyl)-sn-glycero-3-phosphocholine = 1-(9Z)-octadecenoyl-2-hexadecanoylglycerol + (9Z-octadecenoyl)-sn-glycero-3-phosphocholine. It carries out the reaction 1-O-alkylglycerol + a 1,2-diacyl-sn-glycero-3-phosphocholine = 1-O-alkyl-3-acylglycerol + a 1-acyl-sn-glycero-3-phosphocholine. The catalysed reaction is 1-O-alkylglycerol + a 1,2-diacyl-sn-glycero-3-phosphocholine = 1-O-alkyl-3-acylglycerol + a 2-acyl-sn-glycero-3-phosphocholine. The enzyme catalyses 1-O-hexadecylglycerol + 1,2-di-(9Z-octadecenoyl)-sn-glycero-3-phosphocholine = 1-O-hexadecyl-3-(9Z)-octadecenoylglycerol + (9Z-octadecenoyl)-sn-glycero-3-phosphocholine. It catalyses the reaction 1-O-alkyl-2-acyl-sn-glycerol + a 1,2-diacyl-sn-glycero-3-phosphocholine = 1-O-alkyl-2,3-diacyl-sn-glycerol + a 2-acyl-sn-glycero-3-phosphocholine. It carries out the reaction 1-O-alkyl-2-acyl-sn-glycerol + a 1,2-diacyl-sn-glycero-3-phosphocholine = 1-O-alkyl-2,3-diacyl-sn-glycerol + a 1-acyl-sn-glycero-3-phosphocholine. The catalysed reaction is 1-O-hexadecyl-2-acetyl-sn-glycerol + 1,2-di-(9Z-octadecenoyl)-sn-glycero-3-phosphocholine = 1-O-hexadecyl-2-acetyl-3-(9Z)-octadecenoyl-sn-glycerol + (9Z-octadecenoyl)-sn-glycero-3-phosphocholine. The enzyme catalyses 1-O-hexadecyl-2-O-methyl-sn-glycerol + 1,2-di-(9Z-octadecenoyl)-sn-glycero-3-phosphocholine = 1-O-hexadecyl-2-O-methyl-3-(9Z)-octadecenoyl-sn-glycerol + (9Z-octadecenoyl)-sn-glycero-3-phosphocholine. It catalyses the reaction a 1,2-diacyl-sn-glycero-3-phosphoethanolamine + H2O = a 1-acyl-sn-glycero-3-phosphoethanolamine + a fatty acid + H(+). It carries out the reaction 1-acyl-2-(5Z,8Z,11Z,14Z)-eicosatetraenoyl-sn-glycero-3-phosphoethanolamine + H2O = a 1-acyl-sn-glycero-3-phosphoethanolamine + (5Z,8Z,11Z,14Z)-eicosatetraenoate + H(+). The catalysed reaction is a 1,2-diacyl-sn-glycero-3-phospho-(1'-sn-glycerol) + H2O = 1-acyl-sn-glycero-3-phospho-(1'-sn-glycerol) + a fatty acid + H(+). The enzyme catalyses 1-hexadecanoyl-2-(9Z-octadecenoyl)-sn-glycero-3-phospho-(1'-sn-glycerol) + H2O = 1-hexadecanoyl-sn-glycero-3-phospho-(1'-sn-glycerol) + (9Z)-octadecenoate + H(+). It catalyses the reaction a 1,2-diacyl-sn-glycero-3-phospho-(1'-sn-glycerol) + H2O = 2-acyl-sn-glycero-3-phospho-(1'-sn-glycerol) + a fatty acid + H(+). It carries out the reaction 1-hexadecanoyl-2-(9Z-octadecenoyl)-sn-glycero-3-phospho-(1'-sn-glycerol) + H2O = 2-(9Z-octadecenoyl)-sn-glycero-3-phospho-(1'-sn-glycerol) + hexadecanoate + H(+). Phospholipase sn-2 versus sn-1 positional specificity is affected by the phospholipid composition of membranes. Phospholipase A2 activity toward 1-hexadecanoyl-2-(5Z,8Z,11Z,14Z-eicosatetraenoyl)-sn-glycero-3-phosphocholine (PAPE) is enhanced in the presence of 1,2-dioleoyl-sn-glycero-3-phosphocholine (DOPC), which promotes lipid bilayer formation. O-acyltransferase activity is inhibited by antiarrhythmic drug amiodarone. In terms of biological role, has dual calcium-independent phospholipase and O-acyltransferase activities with a potential role in glycerophospholipid homeostasis and remodeling of acyl groups of lipophilic alcohols present in acidic cellular compartments. Catalyzes hydrolysis of the ester bond of the fatty acyl group attached at sn-1 or sn-2 position of phospholipids (phospholipase A1 or A2 activity) and transfer it to the hydroxyl group at the first carbon of lipophilic alcohols (O-acyltransferase activity). Among preferred fatty acyl donors are phosphatidylcholines, phosphatidylethanolamines, phosphatidylglycerols and phosphatidylserines. Favors sn-2 over sn-1 deacylation of unsaturated fatty acyl groups of phosphatidylcholines, phosphatidylethanolamines, and phosphatidylglycerols. Among preferred fatty acyl acceptors are natural lipophilic alcohols including short-chain ceramide N-acetyl-sphingosine (C2 ceramide), alkylacylglycerols, monoacylglycerols, and acylethanolamides such as anandamide and oleoylethanolamide. Selectively hydrolyzes the sn-1 fatty acyl group of truncated oxidized phospholipids and may play a role in detoxification of reactive oxidized phospholipids during oxidative stress. Required for normal phospholipid degradation in alveolar macrophages with potential implications in the clearance of pulmonary surfactant, which is mainly composed of dipalmitoylphosphatidylcholine (1,2-dihexadecanoyl-sn-glycero-3-phosphocholine). Involved in the first step of bis(monoacylglycero)phosphate (BMP) de novo synthesis from phosphatidylglycerol (1,2-diacyl-sn-glycero-3-phospho-(1'-sn-glycerol), PG). BMP is an important player in cargo sorting and degradation, regulation of cellular cholesterol levels and intercellular communication. At neutral pH, hydrolyzes the sn-1 fatty acyl group of the lysophosphatidylcholines. The protein is Lysosomal phospholipase A and acyltransferase of Mus musculus (Mouse).